A 283-amino-acid polypeptide reads, in one-letter code: Energy-coupling factor transporter ATP-binding protein EcfA1 (283 aa).

The 238-residue stretch at 7–244 (VEFRHVSFTY…PELLQEIGLD (238 aa)) folds into the ABC transporter domain. 41–48 (GHNGSGKS) lines the ATP pocket.

This sequence belongs to the ABC transporter superfamily. Energy-coupling factor EcfA family. Forms a stable energy-coupling factor (ECF) transporter complex composed of 2 membrane-embedded substrate-binding proteins (S component), 2 ATP-binding proteins (A component) and 2 transmembrane proteins (T component).

It is found in the cell membrane. In terms of biological role, ATP-binding (A) component of a common energy-coupling factor (ECF) ABC-transporter complex. Unlike classic ABC transporters this ECF transporter provides the energy necessary to transport a number of different substrates. In Lactobacillus acidophilus (strain ATCC 700396 / NCK56 / N2 / NCFM), this protein is Energy-coupling factor transporter ATP-binding protein EcfA1.